Here is a 721-residue protein sequence, read N- to C-terminus: 1,4-alpha-glucan branching enzyme GlgB (721 aa).

The Nucleophile role is filled by Asp404. Glu457 serves as the catalytic Proton donor.

Belongs to the glycosyl hydrolase 13 family. GlgB subfamily. As to quaternary structure, monomer.

It carries out the reaction Transfers a segment of a (1-&gt;4)-alpha-D-glucan chain to a primary hydroxy group in a similar glucan chain.. The protein operates within glycan biosynthesis; glycogen biosynthesis. Functionally, catalyzes the formation of the alpha-1,6-glucosidic linkages in glycogen by scission of a 1,4-alpha-linked oligosaccharide from growing alpha-1,4-glucan chains and the subsequent attachment of the oligosaccharide to the alpha-1,6 position. The sequence is that of 1,4-alpha-glucan branching enzyme GlgB from Bradyrhizobium diazoefficiens (strain JCM 10833 / BCRC 13528 / IAM 13628 / NBRC 14792 / USDA 110).